The chain runs to 263 residues: Phosphatidylglycerol--prolipoprotein diacylglyceryl transferase (263 aa).

The next 4 membrane-spanning stretches (helical) occupy residues 15–35 (ISIH…VYLA), 52–72 (FILL…VIFQ), 83–103 (IFAI…GAAV), and 112–132 (AIAV…AQSI). Arg134 serves as a coordination point for a 1,2-diacyl-sn-glycero-3-phospho-(1'-sn-glycerol). The next 3 membrane-spanning stretches (helical) occupy residues 170–190 (VPTF…ILGL), 200–220 (GDVT…IEGM), and 227–247 (FVGL…GAVL).

The protein belongs to the Lgt family.

It localises to the cell membrane. The catalysed reaction is L-cysteinyl-[prolipoprotein] + a 1,2-diacyl-sn-glycero-3-phospho-(1'-sn-glycerol) = an S-1,2-diacyl-sn-glyceryl-L-cysteinyl-[prolipoprotein] + sn-glycerol 1-phosphate + H(+). Its pathway is protein modification; lipoprotein biosynthesis (diacylglyceryl transfer). In terms of biological role, catalyzes the transfer of the diacylglyceryl group from phosphatidylglycerol to the sulfhydryl group of the N-terminal cysteine of a prolipoprotein, the first step in the formation of mature lipoproteins. The chain is Phosphatidylglycerol--prolipoprotein diacylglyceryl transferase from Streptococcus thermophilus (strain ATCC BAA-491 / LMD-9).